A 202-amino-acid chain; its full sequence is LexA repressor 2 (202 aa).

The segment at residues 28–48 (LAEISEAFGFASRSVARKHIV) is a DNA-binding region (H-T-H motif). Catalysis depends on for autocatalytic cleavage activity residues S123 and K160.

It belongs to the peptidase S24 family. In terms of assembly, homodimer.

The catalysed reaction is Hydrolysis of Ala-|-Gly bond in repressor LexA.. Its function is as follows. Represses a number of genes involved in the response to DNA damage (SOS response), including recA and lexA. In the presence of single-stranded DNA, RecA interacts with LexA causing an autocatalytic cleavage which disrupts the DNA-binding part of LexA, leading to derepression of the SOS regulon and eventually DNA repair. This is LexA repressor 2 from Pseudomonas syringae pv. tomato (strain ATCC BAA-871 / DC3000).